We begin with the raw amino-acid sequence, 1754 residues long: Intraflagellar transport protein 172 homolog (1754 aa).

WD repeat units follow at residues 14-53, 64-103, 110-149, 151-190, 194-232, 283-322, and 519-557; these read EQIQ…RDKF, KNSY…NDKK, PQAS…QSLY, GDSI…EPLG, QHPV…RTFD, ACLY…TVWQ, and TLLS…EHVT. 11 TPR repeats span residues 623-656, 690-723, 748-781, 807-840, 852-885, 1041-1074, 1140-1166, 1167-1199, 1211-1250, 1282-1315, and 1698-1733; these read KAMW…SKAY, GSDL…DEAV, SEQQ…ARAA, SELY…ARAL, TALE…QKAL, RGKL…EDGY, DEVH…FLKA, NKPR…AVGE, TSNY…AEEH, SRSY…NAED, and FPVR…SPGS.

It belongs to the IFT172 family.

The protein localises to the cell projection. The protein resides in the cilium. Required for the maintenance and formation of cilia. This is Intraflagellar transport protein 172 homolog from Drosophila melanogaster (Fruit fly).